A 360-amino-acid polypeptide reads, in one-letter code: tRNA N6-adenosine threonylcarbamoyltransferase (360 aa).

The Fe cation site is built by histidine 115 and histidine 119. Substrate is bound by residues 137-141 (LVSGG), aspartate 170, glycine 183, and asparagine 283. Aspartate 311 serves as a coordination point for Fe cation.

This sequence belongs to the KAE1 / TsaD family. Fe(2+) is required as a cofactor.

It is found in the cytoplasm. It carries out the reaction L-threonylcarbamoyladenylate + adenosine(37) in tRNA = N(6)-L-threonylcarbamoyladenosine(37) in tRNA + AMP + H(+). Its function is as follows. Required for the formation of a threonylcarbamoyl group on adenosine at position 37 (t(6)A37) in tRNAs that read codons beginning with adenine. Is involved in the transfer of the threonylcarbamoyl moiety of threonylcarbamoyl-AMP (TC-AMP) to the N6 group of A37, together with TsaE and TsaB. TsaD likely plays a direct catalytic role in this reaction. In Sinorhizobium medicae (strain WSM419) (Ensifer medicae), this protein is tRNA N6-adenosine threonylcarbamoyltransferase.